Consider the following 143-residue polypeptide: Myosin 1 light chain cam2 (143 aa).

3 consecutive EF-hand domains span residues 6 to 41, 75 to 110, and 111 to 143; these read EQTD…LGIN, ESEE…LGEK, and LSDN…IMAK.

The protein belongs to the calmodulin family. As to quaternary structure, interacts with myo1 and pik1.

The protein localises to the cytoplasm. It is found in the prospore membrane. Its function is as follows. Plays a role in meiosis and sporulation. This is Myosin 1 light chain cam2 from Schizosaccharomyces pombe (strain 972 / ATCC 24843) (Fission yeast).